A 599-amino-acid polypeptide reads, in one-letter code: Dachshund homolog 2 (599 aa).

The tract at residues arginine 69–leucine 155 is DACHbox-N. Disordered regions lie at residues arginine 166–serine 186, leucine 237–histidine 280, and arginine 370–histidine 409. Positions leucine 237–serine 262 are enriched in polar residues. Residues serine 389–glutamine 405 show a composition bias toward low complexity. Positions serine 453 to leucine 533 are DACHbox-C. Residues leucine 459–aspartate 554 are a coiled coil.

The protein belongs to the DACH/dachshund family. In terms of assembly, interacts with SIX6 and EYA2.

The protein localises to the nucleus. In terms of biological role, transcription factor that is involved in regulation of organogenesis. Seems to be a regulator for SIX1 and SIX6. Seems to act as a corepressor of SIX6 in regulating proliferation by directly repressing cyclin-dependent kinase inhibitors, including the p27Kip1 promoter. Is recruited with SIX6 to the p27Kip1 promoter in embryonal retina. SIX6 corepression also seems to involve NCOR1, TBL1, HDAC1 and HDAC3. May be involved together with PAX3, SIX1, and EYA2 in regulation of myogenesis. In the developing somite, expression of DACH2 and PAX3 is regulated by the overlying ectoderm, and DACH2 and PAX3 positively regulate each other's expression. Probably binds to DNA via its DACHbox-N domain. The protein is Dachshund homolog 2 (DACH2) of Homo sapiens (Human).